The following is a 152-amino-acid chain: SsrA-binding protein (152 aa).

This sequence belongs to the SmpB family.

It is found in the cytoplasm. Its function is as follows. Required for rescue of stalled ribosomes mediated by trans-translation. Binds to transfer-messenger RNA (tmRNA), required for stable association of tmRNA with ribosomes. tmRNA and SmpB together mimic tRNA shape, replacing the anticodon stem-loop with SmpB. tmRNA is encoded by the ssrA gene; the 2 termini fold to resemble tRNA(Ala) and it encodes a 'tag peptide', a short internal open reading frame. During trans-translation Ala-aminoacylated tmRNA acts like a tRNA, entering the A-site of stalled ribosomes, displacing the stalled mRNA. The ribosome then switches to translate the ORF on the tmRNA; the nascent peptide is terminated with the 'tag peptide' encoded by the tmRNA and targeted for degradation. The ribosome is freed to recommence translation, which seems to be the essential function of trans-translation. This is SsrA-binding protein from Sulfurihydrogenibium sp. (strain YO3AOP1).